Here is a 478-residue protein sequence, read N- to C-terminus: Divinyl ether synthase CYP74D2 (478 aa).

Residue cysteine 431 participates in heme binding.

This sequence belongs to the cytochrome P450 family. 9-divinyl ether synthase subfamily. As to expression, expressed in roots.

The catalysed reaction is (9S)-hydroperoxy-(10E,12Z)-octadecadienoate = colneleate + H2O. The enzyme catalyses (9S)-hydroperoxy-(10E,12Z,15Z)-octadecatrienoate = colnelenate + H2O. Its function is as follows. Involved in the biosynthesis of the anti-fungal and antibacterial toxins colneleate and colnelenate. Can use (9S)-hydroperoxy-(10E,12Z)-octadecadienoate (9-HPOD) and (9S)-hydroperoxy-(10E,12Z,15Z)-octadecatrienoate (9-HPOT) as substrates but has no activity with the corresponding 13-hydroperoxides (13-HPOD and 13-HPOT). The polypeptide is Divinyl ether synthase CYP74D2 (Solanum tuberosum (Potato)).